A 488-amino-acid polypeptide reads, in one-letter code: Probable glycine dehydrogenase (decarboxylating) subunit 2 (488 aa).

K273 is modified (N6-(pyridoxal phosphate)lysine).

The protein belongs to the GcvP family. C-terminal subunit subfamily. The glycine cleavage system is composed of four proteins: P, T, L and H. In this organism, the P 'protein' is a heterodimer of two subunits. The cofactor is pyridoxal 5'-phosphate.

It carries out the reaction N(6)-[(R)-lipoyl]-L-lysyl-[glycine-cleavage complex H protein] + glycine + H(+) = N(6)-[(R)-S(8)-aminomethyldihydrolipoyl]-L-lysyl-[glycine-cleavage complex H protein] + CO2. Its function is as follows. The glycine cleavage system catalyzes the degradation of glycine. The P protein binds the alpha-amino group of glycine through its pyridoxal phosphate cofactor; CO(2) is released and the remaining methylamine moiety is then transferred to the lipoamide cofactor of the H protein. This Halalkalibacterium halodurans (strain ATCC BAA-125 / DSM 18197 / FERM 7344 / JCM 9153 / C-125) (Bacillus halodurans) protein is Probable glycine dehydrogenase (decarboxylating) subunit 2.